The primary structure comprises 595 residues: Arginine--tRNA ligase (595 aa).

The 'HIGH' region motif lies at 132-142; it reads ANPTGPLHVGH.

This sequence belongs to the class-I aminoacyl-tRNA synthetase family. Monomer.

The protein localises to the cytoplasm. It catalyses the reaction tRNA(Arg) + L-arginine + ATP = L-arginyl-tRNA(Arg) + AMP + diphosphate. The chain is Arginine--tRNA ligase from Cupriavidus pinatubonensis (strain JMP 134 / LMG 1197) (Cupriavidus necator (strain JMP 134)).